Here is a 408-residue protein sequence, read N- to C-terminus: Dual-specificity RNA methyltransferase RlmN (408 aa).

The active-site Proton acceptor is the Glu-120. The Radical SAM core domain maps to 126–375 (EEGRGTLCIS…IRTPRGRDIL (250 aa)). A disulfide bridge links Cys-133 with Cys-378. [4Fe-4S] cluster is bound by residues Cys-140, Cys-144, and Cys-147. S-adenosyl-L-methionine contacts are provided by residues 204-205 (GE), Ser-236, 258-260 (SLH), and Asn-335. Cys-378 functions as the S-methylcysteine intermediate in the catalytic mechanism.

Belongs to the radical SAM superfamily. RlmN family. The cofactor is [4Fe-4S] cluster.

It localises to the cytoplasm. It catalyses the reaction adenosine(2503) in 23S rRNA + 2 reduced [2Fe-2S]-[ferredoxin] + 2 S-adenosyl-L-methionine = 2-methyladenosine(2503) in 23S rRNA + 5'-deoxyadenosine + L-methionine + 2 oxidized [2Fe-2S]-[ferredoxin] + S-adenosyl-L-homocysteine. It carries out the reaction adenosine(37) in tRNA + 2 reduced [2Fe-2S]-[ferredoxin] + 2 S-adenosyl-L-methionine = 2-methyladenosine(37) in tRNA + 5'-deoxyadenosine + L-methionine + 2 oxidized [2Fe-2S]-[ferredoxin] + S-adenosyl-L-homocysteine. Functionally, specifically methylates position 2 of adenine 2503 in 23S rRNA and position 2 of adenine 37 in tRNAs. m2A2503 modification seems to play a crucial role in the proofreading step occurring at the peptidyl transferase center and thus would serve to optimize ribosomal fidelity. The polypeptide is Dual-specificity RNA methyltransferase RlmN (Rhizobium leguminosarum bv. trifolii (strain WSM2304)).